A 526-amino-acid polypeptide reads, in one-letter code: Sugar transport protein 13 (526 aa).

Residues 1–18 (MTGGGFATSANGVEFEAK) lie on the Cytoplasmic side of the membrane. The helical transmembrane segment at 19 to 39 (ITPIVIISCIMAATGGLMFGY) threads the bilayer. Residues 40–81 (DVGVSGGVTSMPDFLEKFFPVVYRKVVAGADKDSNYCKYDNQ) lie on the Extracellular side of the membrane. A helical membrane pass occupies residues 82–102 (GLQLFTSSLYLAGLTATFFAS). Residues 103–111 (YTTRTLGRR) are Cytoplasmic-facing. Residues 112–132 (LTMLIAGVFFIIGVALNAGAQ) traverse the membrane as a helical segment. Over 133-141 (DLAMLIAGR) the chain is Extracellular. A helical transmembrane segment spans residues 142-162 (ILLGCGVGFANQAVPLFLSEI). Topologically, residues 163 to 168 (APTRIR) are cytoplasmic. Residues 169–189 (GGLNILFQLNVTIGILFANLV) traverse the membrane as a helical segment. The Extracellular portion of the chain corresponds to 190-203 (NYGTAKIKGGWGWR). A helical transmembrane segment spans residues 204 to 224 (LSLGLAGIPALLLTVGALLVT). Over 225-296 (ETPNSLVERG…IAVALQIFQQ (72 aa)) the chain is Cytoplasmic. The helical transmembrane segment at 297-317 (CTGINAIMFYAPVLFSTLGFG) threads the bilayer. Over 318–319 (SD) the chain is Extracellular. Residues 320-340 (ASLYSAVVTGAVNVLSTLVSI) traverse the membrane as a helical segment. Topologically, residues 341 to 349 (YSVDKVGRR) are cytoplasmic. The helical transmembrane segment at 350-370 (VLLLEAGVQMFFSQVVIAIIL) threads the bilayer. The Extracellular segment spans residues 371-383 (GVKVTDTSTNLSK). The helical transmembrane segment at 384–404 (GFAILVVVMICTYVAAFAWSW) threads the bilayer. The Cytoplasmic portion of the chain corresponds to 405 to 426 (GPLGWLIPSETFPLETRSAGQS). Residues 427–447 (VTVCVNLLFTFIIAQAFLSML) form a helical membrane-spanning segment. Residues 448–451 (CHFK) are Extracellular-facing. Residues 452-472 (FGIFIFFSAWVLIMSVFVMFL) form a helical membrane-spanning segment. Residues 473–526 (LPETKNIPIEEMTERVWKKHWFWARFMDDHNDHEFVNGEKSNGKSNGFDPSTRL) lie on the Cytoplasmic side of the membrane.

It belongs to the major facilitator superfamily. Sugar transporter (TC 2.A.1.1) family.

It is found in the cell membrane. In terms of biological role, mediates an active uptake of hexoses, probably by sugar/hydrogen symport. The polypeptide is Sugar transport protein 13 (STP13) (Arabidopsis thaliana (Mouse-ear cress)).